We begin with the raw amino-acid sequence, 224 residues long: Uracil-DNA glycosylase (224 aa).

D65 acts as the Proton acceptor in catalysis.

Belongs to the uracil-DNA glycosylase (UDG) superfamily. UNG family.

The protein resides in the cytoplasm. The catalysed reaction is Hydrolyzes single-stranded DNA or mismatched double-stranded DNA and polynucleotides, releasing free uracil.. Excises uracil residues from the DNA which can arise as a result of misincorporation of dUMP residues by DNA polymerase or due to deamination of cytosine. This Buchnera aphidicola subsp. Baizongia pistaciae (strain Bp) protein is Uracil-DNA glycosylase.